The sequence spans 620 residues: uncharacterized protein (620 aa).

The next 4 helical transmembrane spans lie at 66-86 (LLNF…NQII), 238-258 (FFDA…NLLW), 546-566 (LGII…VWTI), and 584-604 (IIFI…ILVF).

It localises to the cell membrane. This is an uncharacterized protein from Mycoplasma genitalium (strain ATCC 33530 / DSM 19775 / NCTC 10195 / G37) (Mycoplasmoides genitalium).